A 179-amino-acid polypeptide reads, in one-letter code: TPD1 protein homolog 1 (179 aa).

The first 30 residues, 1–30 (MRMEHIYKFQHWLFFIGLGVLLSLSLSVKA), serve as a signal peptide directing secretion.

This chain is TPD1 protein homolog 1, found in Arabidopsis thaliana (Mouse-ear cress).